Consider the following 409-residue polypeptide: Argininosuccinate synthase (409 aa).

ATP-binding positions include 10-18 (AYSGGLDTS) and alanine 37. Tyrosine 90 and serine 95 together coordinate L-citrulline. Glycine 120 lines the ATP pocket. Residues threonine 122, asparagine 126, and aspartate 127 each coordinate L-aspartate. Asparagine 126 is a binding site for L-citrulline. L-citrulline-binding residues include arginine 130, serine 182, serine 191, glutamate 267, and tyrosine 279.

It belongs to the argininosuccinate synthase family. Type 1 subfamily. Homotetramer.

Its subcellular location is the cytoplasm. It carries out the reaction L-citrulline + L-aspartate + ATP = 2-(N(omega)-L-arginino)succinate + AMP + diphosphate + H(+). It participates in amino-acid biosynthesis; L-arginine biosynthesis; L-arginine from L-ornithine and carbamoyl phosphate: step 2/3. This is Argininosuccinate synthase from Aromatoleum aromaticum (strain DSM 19018 / LMG 30748 / EbN1) (Azoarcus sp. (strain EbN1)).